Reading from the N-terminus, the 103-residue chain is ATP synthase F(0) complex subunit g, mitochondrial (103 aa).

Position 2 is an N-acetylalanine (alanine 2). Residues lysine 11, lysine 24, lysine 35, and lysine 54 each carry the N6-acetyllysine modification.

In terms of assembly, component of the ATP synthase complex composed at least of ATP5F1A/subunit alpha, ATP5F1B/subunit beta, ATP5MC1/subunit c (homooctomer), MT-ATP6/subunit a, MT-ATP8/subunit 8, ATP5ME/subunit e, ATP5MF/subunit f, ATP5MG/subunit g, ATP5MK/subunit k, ATP5MJ/subunit j, ATP5F1C/subunit gamma, ATP5F1D/subunit delta, ATP5F1E/subunit epsilon, ATP5PF/subunit F6, ATP5PB/subunit b, ATP5PD/subunit d, ATP5PO/subunit OSCP. ATP synthase complex consists of a soluble F(1) head domain (subunits alpha(3) and beta(3)) - the catalytic core - and a membrane F(0) domain - the membrane proton channel (subunits c, a, 8, e, f, g, k and j). These two domains are linked by a central stalk (subunits gamma, delta, and epsilon) rotating inside the F1 region and a stationary peripheral stalk (subunits F6, b, d, and OSCP).

The protein resides in the mitochondrion. It localises to the mitochondrion inner membrane. Functionally, subunit g, of the mitochondrial membrane ATP synthase complex (F(1)F(0) ATP synthase or Complex V) that produces ATP from ADP in the presence of a proton gradient across the membrane which is generated by electron transport complexes of the respiratory chain. ATP synthase complex consist of a soluble F(1) head domain - the catalytic core - and a membrane F(1) domain - the membrane proton channel. These two domains are linked by a central stalk rotating inside the F(1) region and a stationary peripheral stalk. During catalysis, ATP synthesis in the catalytic domain of F(1) is coupled via a rotary mechanism of the central stalk subunits to proton translocation. In vivo, can only synthesize ATP although its ATP hydrolase activity can be activated artificially in vitro. Part of the complex F(0) domain. The polypeptide is ATP synthase F(0) complex subunit g, mitochondrial (Bos taurus (Bovine)).